The primary structure comprises 175 residues: Small ribosomal subunit protein uS4 (175 aa).

In terms of domain architecture, S4 RNA-binding spans Arg-105–Ala-169.

It belongs to the universal ribosomal protein uS4 family. As to quaternary structure, part of the 30S ribosomal subunit. Contacts protein S5. The interaction surface between S4 and S5 is involved in control of translational fidelity.

In terms of biological role, one of the primary rRNA binding proteins, it binds directly to 16S rRNA where it nucleates assembly of the body of the 30S subunit. Functionally, with S5 and S12 plays an important role in translational accuracy. The chain is Small ribosomal subunit protein uS4 from Haloquadratum walsbyi (strain DSM 16790 / HBSQ001).